A 225-amino-acid chain; its full sequence is Membrane protein (225 aa).

The Virion surface portion of the chain corresponds to 1–20 (MDNTTNCTLGTEQAVQLFKE). The chain crosses the membrane as a helical span at residues 21–41 (YNLFVTAFLLFLTILLQYGYA). Over 42 to 51 (TRNKVIYILK) the chain is Intravirion. The chain crosses the membrane as a helical span at residues 52 to 72 (MIVLWCFWPLNIAVGAISCIY). Residues 73–77 (PPNTG) are Virion surface-facing. Residues 78-98 (GLVAAIILTVFACLSFIGYWI) traverse the membrane as a helical segment. Residues 99–225 (QSFRLFKRCR…VATGGSSLYT (127 aa)) lie on the Intravirion side of the membrane.

The protein belongs to the gammacoronaviruses M protein family. As to quaternary structure, homomultimer. Interacts with envelope E protein in the budding compartment of the host cell, which is located between endoplasmic reticulum and the Golgi complex. Forms a complex with HE and S proteins. Interacts with nucleocapsid N protein. This interaction probably participates in RNA packaging into the virus.

The protein resides in the virion membrane. The protein localises to the host Golgi apparatus membrane. In terms of biological role, component of the viral envelope that plays a central role in virus morphogenesis and assembly via its interactions with other viral proteins. This Avian infectious bronchitis virus (strain 6/82) (IBV) protein is Membrane protein.